The primary structure comprises 834 residues: MNLTRREFAKANAAAIAAAAAGLPILVRASNLVTEADVTSLDWNKAPCRFCGTGCSVMVATRDGQVVATHGDIKAEVNRGINCVKGYFLSKIMYGSDRLTRPLLRMKDGKFDKQGEFQPISWEQAFDIMAEKFKAALKAKGPESVGMFGSGQWTVWEGYAANKLFKAGLRSNNIDPNARHCMASAVMGFMRSFGMDEPMGCYDDIEATDSFVLWGSNMAEMHPVLWSRVTDRRLSAPQVKVAVLSTFEHRSFELADIPMVFKPQTDLIILNYIANHIIESGAVNRDFVERHVRFAHGAEDIGYGLRPDDPLEKKAKNADKANTWSDIDFNAFAEFVKPYTLERAARESGVPAERLKALAELYAAPRRKVVSFWTMGFNQHTRGVWANNLIYNIHLLTGKISEPGNSPFSLTGQPSACGTAREVGTFSHRLPADLVVTNPKHRETAEKIWKVPAGTIQEKVGFHAVQQSRMLKDGVLNVYWTQVSNNMQAGPNVMQEVLPGWRNPDNFVIVSDVYPTVSAQAADLILPSAMWVEKEGAFGNAERRTQFWHQLVKAPGEAKSDLWQLVEFSKRFTTDEVWPAELLAKAPELKGKTLYEVLFRNGQVDRFPASDLAKGYANDEVDAFGFYIQKGLFEEYAAFGRGHGHDLAPFDAYHEARGLRWPVVDGKETRWRYREGYDPYVSKGSGVQFYGYPDKKAIVFALPYEPPAEAPDRDYPFWLATGRVLEHWHTGSMTARVPELYKAVPDAVVYMHPDDARQLKLRRGSEVRVVSRRGEIRARVETRGRNKPPQGLVFVPFFDANKLINKVTLDATDPISKQTDYKKCAVRIELLNLA.

The tat-type signal signal peptide spans 1–29 (MNLTRREFAKANAAAIAAAAAGLPILVRA). The 57-residue stretch at 41 to 97 (LDWNKAPCRFCGTGCSVMVATRDGQVVATHGDIKAEVNRGINCVKGYFLSKIMYGSD) folds into the 4Fe-4S Mo/W bis-MGD-type domain. Residues Cys48, Cys51, Cys55, and Cys83 each coordinate [4Fe-4S] cluster. Residues Lys85, Gln152, Asn177, Cys181, 214 to 221 (WGSNMAEM), 245 to 249 (STFEH), 264 to 266 (QTD), Met375, Gln379, Asn485, 511 to 512 (SD), Lys534, Asp561, and 721 to 730 (TGRVLEHWHT) contribute to the Mo-bis(molybdopterin guanine dinucleotide) site. Phe797 lines the substrate pocket. Mo-bis(molybdopterin guanine dinucleotide)-binding residues include Asn805 and Lys822.

The protein belongs to the prokaryotic molybdopterin-containing oxidoreductase family. NasA/NapA/NarB subfamily. As to quaternary structure, component of the periplasmic nitrate reductase NapAB complex composed of NapA and NapB. [4Fe-4S] cluster is required as a cofactor. The cofactor is Mo-bis(molybdopterin guanine dinucleotide). In terms of processing, predicted to be exported by the Tat system. The position of the signal peptide cleavage has not been experimentally proven.

It is found in the periplasm. The enzyme catalyses 2 Fe(II)-[cytochrome] + nitrate + 2 H(+) = 2 Fe(III)-[cytochrome] + nitrite + H2O. Its function is as follows. Catalytic subunit of the periplasmic nitrate reductase complex NapAB. Receives electrons from NapB and catalyzes the reduction of nitrate to nitrite. In Pseudomonas paraeruginosa (strain DSM 24068 / PA7) (Pseudomonas aeruginosa (strain PA7)), this protein is Periplasmic nitrate reductase.